The chain runs to 736 residues: Replication restart protein PriA (736 aa).

The region spanning 230–396 (DFKGNISKEN…KEGRIRTFNF (167 aa)) is the Helicase ATP-binding domain. 243–250 (GPTGSGKT) lines the ATP pocket. A DEAH box motif is present at residues 339 to 342 (DEEH). Zn(2+) contacts are provided by cysteine 452, cysteine 455, cysteine 461, cysteine 464, cysteine 479, cysteine 482, cysteine 492, and cysteine 495. The 157-residue stretch at 487–643 (GLVESCPRCG…EELERRKALG (157 aa)) folds into the Helicase C-terminal domain.

This sequence belongs to the helicase family. PriA subfamily. As to quaternary structure, component of the replication restart primosome. Zn(2+) is required as a cofactor.

It carries out the reaction Couples ATP hydrolysis with the unwinding of duplex DNA by translocating in the 3'-5' direction.. The enzyme catalyses ATP + H2O = ADP + phosphate + H(+). Initiates the restart of stalled replication forks, which reloads the replicative helicase on sites other than the origin of replication. Recognizes and binds to abandoned replication forks and remodels them to uncover a helicase loading site. Promotes assembly of the primosome at these replication forks. The chain is Replication restart protein PriA from Thermotoga maritima (strain ATCC 43589 / DSM 3109 / JCM 10099 / NBRC 100826 / MSB8).